The primary structure comprises 113 residues: UPF0122 protein Lreu_1156 (113 aa).

This sequence belongs to the UPF0122 family.

Functionally, might take part in the signal recognition particle (SRP) pathway. This is inferred from the conservation of its genetic proximity to ftsY/ffh. May be a regulatory protein. The protein is UPF0122 protein Lreu_1156 of Limosilactobacillus reuteri (strain DSM 20016) (Lactobacillus reuteri).